The chain runs to 363 residues: Des-methyl DIF-1 methyltransferase A (363 aa).

The S-adenosyl-L-methionine site is built by glycine 195, aspartate 221, aspartate 250, leucine 251, and lysine 266. The Proton acceptor role is filled by histidine 270.

The protein belongs to the class I-like SAM-binding methyltransferase superfamily. Cation-independent O-methyltransferase family. COMT subfamily.

The enzyme catalyses (3,5-dichloro-2,4,6-trihydroxyphenyl)hexan-1-one + S-adenosyl-L-methionine = 1-(3,5-dichloro-2,6-dihydroxy-4-methoxyphenyl)hexan-1-one + S-adenosyl-L-homocysteine + H(+). O-methyltransferase; part of the gene cluster that mediates the biosynthesis of DIF-1 (Differentiation Inducing Factor-1), a signal molecule involved in the differentiation of pstO (prestalk-O) cells. The three-step process begins with the formation of (2,4,6-trihydroxyphenyl)-1-hexan-1-one (THPH) by the polyketide synthase StlB. THPH is then dichlorinated by the flavin-dependent halogenase ChlA. The last step of DIF-1 biosynthesis is the O-methylation of dichloro-THPH (or des-methyl-DIF-1) by the methyltransferase DmtA to yield DIF-1. In Dictyostelium discoideum (Social amoeba), this protein is Des-methyl DIF-1 methyltransferase A.